We begin with the raw amino-acid sequence, 470 residues long: Putative dipeptidase TSTA_079200 (470 aa).

A helical transmembrane segment spans residues 40 to 60; it reads AWLFGLGTLGIILASVLLNPF. Residues histidine 92 and aspartate 94 each contribute to the Zn(2+) site. A disulfide bridge connects residues cysteine 143 and cysteine 237. An N-linked (GlcNAc...) asparagine glycan is attached at asparagine 188. Glutamate 208 is a Zn(2+) binding site. Position 235 (histidine 235) interacts with substrate. Zn(2+) is bound by residues histidine 279 and histidine 300. Arginine 311 and aspartate 371 together coordinate substrate.

Belongs to the metallo-dependent hydrolases superfamily. Peptidase M19 family. Requires Zn(2+) as cofactor.

The protein resides in the membrane. The catalysed reaction is an L-aminoacyl-L-amino acid + H2O = 2 an L-alpha-amino acid. In terms of biological role, hydrolyzes a wide range of dipeptides. The protein is Putative dipeptidase TSTA_079200 of Talaromyces stipitatus (strain ATCC 10500 / CBS 375.48 / QM 6759 / NRRL 1006) (Penicillium stipitatum).